The primary structure comprises 340 residues: Diacylglycerol acyltransferase/mycolyltransferase Ag85C (340 aa).

The first 45 residues, 1–45 (MTFFEQVRRLRSAATTLPRRLAIAAMGAVLVYGLVGTFGGPATAG), serve as a signal peptide directing secretion. 86–87 (LR) contributes to the substrate binding site. A fibronectin-binding region spans residues 102–112 (FEEYYQSGLSV). Residues Ser-170 and Asn-198 each coordinate substrate. Ser-170 acts as the Nucleophile in catalysis. Glu-274 is an active-site residue. Substrate-binding positions include 276 to 279 (LTLR) and 306 to 308 (HSW). His-306 is an active-site residue.

Belongs to the mycobacterial A85 antigen family. As to quaternary structure, homodimer.

It localises to the secreted. It catalyses the reaction an acyl-CoA + a 1,2-diacyl-sn-glycerol = a triacyl-sn-glycerol + CoA. The catalysed reaction is 2 alpha,alpha'-trehalose 6-mycolate = alpha,alpha'-trehalose 6,6'-bismycolate + alpha,alpha-trehalose. The antigen 85 proteins (FbpA, FbpB, FbpC) are responsible for the high affinity of mycobacteria to fibronectin, a large adhesive glycoprotein, which facilitates the attachment of M.tuberculosis to murine alveolar macrophages (AMs). They also help to maintain the integrity of the cell wall by catalyzing the transfer of mycolic acids to cell wall arabinogalactan and through the synthesis of alpha,alpha-trehalose dimycolate (TDM, cord factor). They catalyze the transfer of a mycoloyl residue from one molecule of alpha,alpha-trehalose monomycolate (TMM) to another TMM, leading to the formation of TDM. The chain is Diacylglycerol acyltransferase/mycolyltransferase Ag85C (fbpC) from Mycobacterium bovis (strain ATCC BAA-935 / AF2122/97).